We begin with the raw amino-acid sequence, 155 residues long: Transcription antitermination protein NusB (155 aa).

This sequence belongs to the NusB family.

Involved in transcription antitermination. Required for transcription of ribosomal RNA (rRNA) genes. Binds specifically to the boxA antiterminator sequence of the ribosomal RNA (rrn) operons. The polypeptide is Transcription antitermination protein NusB (Aliivibrio fischeri (strain ATCC 700601 / ES114) (Vibrio fischeri)).